Consider the following 241-residue polypeptide: Ribonuclease PH (241 aa).

Residues Arg87 and 125-127 (GTR) contribute to the phosphate site.

It belongs to the RNase PH family. In terms of assembly, homohexameric ring arranged as a trimer of dimers.

It catalyses the reaction tRNA(n+1) + phosphate = tRNA(n) + a ribonucleoside 5'-diphosphate. Functionally, phosphorolytic 3'-5' exoribonuclease that plays an important role in tRNA 3'-end maturation. Removes nucleotide residues following the 3'-CCA terminus of tRNAs; can also add nucleotides to the ends of RNA molecules by using nucleoside diphosphates as substrates, but this may not be physiologically important. Probably plays a role in initiation of 16S rRNA degradation (leading to ribosome degradation) during starvation. The chain is Ribonuclease PH from Salinispora tropica (strain ATCC BAA-916 / DSM 44818 / JCM 13857 / NBRC 105044 / CNB-440).